Reading from the N-terminus, the 74-residue chain is Large ribosomal subunit protein uL29 (74 aa).

This sequence belongs to the universal ribosomal protein uL29 family.

The polypeptide is Large ribosomal subunit protein uL29 (Streptomyces avermitilis (strain ATCC 31267 / DSM 46492 / JCM 5070 / NBRC 14893 / NCIMB 12804 / NRRL 8165 / MA-4680)).